Consider the following 30-residue polypeptide: PLEALNVQLYNVEVXXTNDKGEADXPGEIQ.

In terms of assembly, binds to carcinoembryonic antigen (CEA). Post-translationally, the N-terminus is blocked.

The protein localises to the cell membrane. Functionally, may play a role in the development of hepatic metastases from colorectal cancers. The protein is 80 kDa carcinoembryonic antigen-binding protein of Rattus norvegicus (Rat).